Here is a 426-residue protein sequence, read N- to C-terminus: UDP-N-acetylmuramoylalanine--D-glutamate ligase (426 aa).

112 to 118 provides a ligand contact to ATP; the sequence is GSVGKST.

Belongs to the MurCDEF family.

The protein localises to the cytoplasm. The enzyme catalyses UDP-N-acetyl-alpha-D-muramoyl-L-alanine + D-glutamate + ATP = UDP-N-acetyl-alpha-D-muramoyl-L-alanyl-D-glutamate + ADP + phosphate + H(+). It functions in the pathway cell wall biogenesis; peptidoglycan biosynthesis. Functionally, cell wall formation. Catalyzes the addition of glutamate to the nucleotide precursor UDP-N-acetylmuramoyl-L-alanine (UMA). The sequence is that of UDP-N-acetylmuramoylalanine--D-glutamate ligase from Thermosipho melanesiensis (strain DSM 12029 / CIP 104789 / BI429).